Here is a 1045-residue protein sequence, read N- to C-terminus: Extracellular serine protease (1045 aa).

An N-terminal signal peptide occupies residues 1-27; sequence MILNKRLKLAYCVFLGCYGLSIHSSLA. In terms of domain architecture, Peptidase S8 spans 49–397; sequence QWGLEAISAE…WGRVNLRDAI (349 aa). Catalysis depends on charge relay system residues Asp76, His112, and Ser341. Positions 646–1045 are cleaved as a propeptide — translocator domain; removed in mature form; it reads SLASTENEKA…SVNAGLTWRF (400 aa). One can recognise an Autotransporter domain in the interval 769 to 1045; it reads IKADDNGAWA…SVNAGLTWRF (277 aa).

It belongs to the peptidase S8 family.

Its subcellular location is the secreted. The protein is Extracellular serine protease of Serratia marcescens.